Here is a 514-residue protein sequence, read N- to C-terminus: Nitric oxide reductase transcription regulator NorR1 (514 aa).

At D54 the chain carries 4-aspartylphosphate. One can recognise a Sigma-54 factor interaction domain in the interval 187–416; sequence IIGQSQAIAG…LEHVISRAAL (230 aa). Residues 215–222 and 287–296 contribute to the ATP site; these read GETGVGKE and EVGELPLSIQ. Positions 490 to 509 form a DNA-binding region, H-T-H motif; that stretch reads WAKAARQLGMDASNLHKLAK.

It participates in nitrogen metabolism; nitrate reduction (denitrification) [regulation]. Its function is as follows. Required for the nitric oxide (NO) induced expression of NO reductase. Not required for expression of 2 other pathway members, nitrate reductase (nirS) and nitrous oxide reductase (nosZ). The sequence is that of Nitric oxide reductase transcription regulator NorR1 (norR1) from Cupriavidus necator (strain ATCC 17699 / DSM 428 / KCTC 22496 / NCIMB 10442 / H16 / Stanier 337) (Ralstonia eutropha).